Here is a 288-residue protein sequence, read N- to C-terminus: Pantothenate synthetase (288 aa).

ATP is bound at residue 30 to 37 (MGFLHEGH). The Proton donor role is filled by His-37. Residue Gln-61 participates in (R)-pantoate binding. Gln-61 provides a ligand contact to beta-alanine. ATP is bound at residue 147–150 (GMKD). Gln-153 is a (R)-pantoate binding site. ATP is bound at residue 184–187 (KSSR).

This sequence belongs to the pantothenate synthetase family. As to quaternary structure, homodimer.

Its subcellular location is the cytoplasm. It carries out the reaction (R)-pantoate + beta-alanine + ATP = (R)-pantothenate + AMP + diphosphate + H(+). Its pathway is cofactor biosynthesis; (R)-pantothenate biosynthesis; (R)-pantothenate from (R)-pantoate and beta-alanine: step 1/1. Its function is as follows. Catalyzes the condensation of pantoate with beta-alanine in an ATP-dependent reaction via a pantoyl-adenylate intermediate. The protein is Pantothenate synthetase of Bacillus licheniformis (strain ATCC 14580 / DSM 13 / JCM 2505 / CCUG 7422 / NBRC 12200 / NCIMB 9375 / NCTC 10341 / NRRL NRS-1264 / Gibson 46).